The primary structure comprises 306 residues: Ribonuclease Z (306 aa).

Zn(2+) contacts are provided by His63, His65, Asp67, His68, His140, Asp211, and His269. Residue Asp67 is the Proton acceptor of the active site.

This sequence belongs to the RNase Z family. As to quaternary structure, homodimer. Zn(2+) serves as cofactor.

It carries out the reaction Endonucleolytic cleavage of RNA, removing extra 3' nucleotides from tRNA precursor, generating 3' termini of tRNAs. A 3'-hydroxy group is left at the tRNA terminus and a 5'-phosphoryl group is left at the trailer molecule.. Functionally, zinc phosphodiesterase, which displays some tRNA 3'-processing endonuclease activity. Probably involved in tRNA maturation, by removing a 3'-trailer from precursor tRNA. The chain is Ribonuclease Z from Listeria welshimeri serovar 6b (strain ATCC 35897 / DSM 20650 / CCUG 15529 / CIP 8149 / NCTC 11857 / SLCC 5334 / V8).